A 166-amino-acid polypeptide reads, in one-letter code: Small ribosomal subunit protein uS5 (166 aa).

One can recognise an S5 DRBM domain in the interval 12 to 75; the sequence is YIEKLVQVNR…EAARRNMIQV (64 aa).

The protein belongs to the universal ribosomal protein uS5 family. Part of the 30S ribosomal subunit. Contacts proteins S4 and S8.

Functionally, with S4 and S12 plays an important role in translational accuracy. In terms of biological role, located at the back of the 30S subunit body where it stabilizes the conformation of the head with respect to the body. This Pseudomonas putida (strain ATCC 700007 / DSM 6899 / JCM 31910 / BCRC 17059 / LMG 24140 / F1) protein is Small ribosomal subunit protein uS5.